The primary structure comprises 965 residues: Vacuolar membrane protease (965 aa).

The Cytoplasmic portion of the chain corresponds to 1 to 16; the sequence is MARPSLSPSNPLGFTP. A helical membrane pass occupies residues 17 to 37; sequence WPVTVITAVVYLALVVPLLVV. The Vacuolar segment spans residues 38–387; the sequence is HHVVPSAPSS…SAFVVFELHT (350 aa). N-linked (GlcNAc...) asparagine glycosylation is found at Asn-53 and Asn-119. Residues His-171 and Asp-183 each contribute to the Zn(2+) site. Glu-217 serves as the catalytic Proton acceptor. Glu-218, Glu-243, and His-316 together coordinate Zn(2+). Residues 388–408 form a helical membrane-spanning segment; it reads LFALSVTLLVVAPLVLLVTSI. Topologically, residues 409 to 441 are cytoplasmic; it reads ALARADKMYLFRSSASPEDSDGSEVVPLHGVRG. Residues 442-462 traverse the membrane as a helical segment; the sequence is FFRFPFLLVIPTAVTVGLAYL. Residues 463 to 472 lie on the Vacuolar side of the membrane; it reads VTKFNPYIIH. Residues 473–493 traverse the membrane as a helical segment; the sequence is SSEYAVWSMMISAWVFLAWFV. Topologically, residues 494 to 507 are cytoplasmic; sequence SRVADFARPSAFHR. The chain crosses the membrane as a helical span at residues 508–528; sequence VYTLTWLFLVEWVFLVISTVY. Residues 529–532 are Vacuolar-facing; it reads ENQY. A helical transmembrane segment spans residues 533–553; the sequence is GLAGGYFVLFVFAGTFLATWI. Residues 554–661 lie on the Cytoplasmic side of the membrane; the sequence is SYLELFALPR…WSIHLPKWVW (108 aa). Residues 577-610 form a disordered region; it reads RTSSHGSRLGTASGEDVEDGEDEDDDGTTAEATE. The segment covering 591-604 has biased composition (acidic residues); that stretch reads EDVEDGEDEDDDGT. The chain crosses the membrane as a helical span at residues 662 to 682; that stretch reads VLQFLLTAPLVLIFVGPLALL. The Vacuolar segment spans residues 683-698; sequence LTSALRQTGQDGSPSL. Residues 699-719 traverse the membrane as a helical segment; it reads FIYIAVAALTTLLFIPLLPFI. The Cytoplasmic portion of the chain corresponds to 720–725; it reads HRYTHH. Residues 726–746 traverse the membrane as a helical segment; the sequence is IPLFLLCVFAGTLIYNLVAFP. Residues 747–965 lie on the Vacuolar side of the membrane; sequence FSPANRLKLF…LVEGSRRFEV (219 aa). N-linked (GlcNAc...) asparagine glycans are attached at residues Asn-793 and Asn-830.

It belongs to the peptidase M28 family. It depends on Zn(2+) as a cofactor.

It localises to the vacuole membrane. Functionally, may be involved in vacuolar sorting and osmoregulation. The sequence is that of Vacuolar membrane protease from Aspergillus fumigatus (strain CBS 144.89 / FGSC A1163 / CEA10) (Neosartorya fumigata).